The chain runs to 1255 residues: Structural polyprotein (1255 aa).

Residues 1 to 33 are necessary for nucleocapsid assembly and virus assembly; the sequence is MFPFQPMYPMQPMPYRNPFAAPRRPWFPRTDPF. A host transcription inhibition region spans residues 33-68; the sequence is FLAMQVQELTRSMANLTFKQRRDAPPEGPPAKKPKR. The Supraphysiological nuclear export signal motif lies at 41–48; the sequence is LTRSMANL. A disordered region spans residues 44-119; it reads SMANLTFKQR…KKPGKRQRMV (76 aa). A Nuclear localization signal motif is present at residues 64 to 68; it reads KKPKR. A compositionally biased stretch (basic residues) spans 80-92; it reads GKKKKNQGKKKAK. Residues 91 to 127 form a binding to the viral RNA region; sequence AKTGPPNPKAQSGNKKKPNKKPGKRQRMVMKLESDKT. A Phosphothreonine modification is found at T93. Residues 104-118 show a composition bias toward basic residues; the sequence is NKKKPNKKPGKRQRM. The ribosome-binding stretch occupies residues 112–126; the sequence is PGKRQRMVMKLESDK. The residue at position 124 (S124) is a Phosphoserine. One can recognise a Peptidase S3 domain in the interval 126–275; that stretch reads KTFPIMLEGK…KYTPENCEQW (150 aa). Residue T127 is modified to Phosphothreonine. The active-site Charge relay system is H152. The interaction with spike glycoprotein E2 stretch occupies residues 168 to 173; that stretch reads KKASKY. Residues D174 and S226 each act as charge relay system in the active site. The interaction with spike glycoprotein E2 stretch occupies residues 260–264; that stretch reads EKGVT. Residues 276–287 form a functions as an uncleaved signal peptide for the precursor of protein E3/E2 region; that stretch reads SLVTTMCLLANV. Over 276–701 the chain is Extracellular; that stretch reads SLVTTMCLLA…HYYHRYPMST (426 aa). Disulfide bonds link C282/C291, C353/C457, C356/C361, C424/C438, C485/C600, C534/C560, and C536/C554. An N-linked (GlcNAc...) asparagine; by host glycan is attached at N286. The N-linked (GlcNAc...) asparagine; by host glycan is linked to N652. The chain crosses the membrane as a helical span at residues 702–722; it reads ILGLSICAAIVTVSVAASTWL. The Cytoplasmic portion of the chain corresponds to 723 to 757; the sequence is FCKSRVSCLTPYRLTPNARMPLCLAVLCCARTARA. The segment at 725-729 is interaction with the capsid protein; the sequence is KSRVS. Residues C730, C750, and C751 are each lipidated (S-palmitoyl cysteine; by host). Positions 730-750 are transient transmembrane before p62-6K protein processing; sequence CLTPYRLTPNARMPLCLAVLC. C730 and C751 form a disulfide bridge. Topologically, residues 758 to 769 are extracellular; sequence ETTWESLDHLWN. A helical transmembrane segment spans residues 770 to 790; it reads NNQQMFWIQLLIPLAALIVVT. Position 791 (R791) is a topological domain, cytoplasmic. Residues 792–812 traverse the membrane as a helical segment; that stretch reads LLKCVCCVVPFLVVAGAAGAG. At 813–1225 the chain is on the extracellular side; that stretch reads AYEHATTMPS…SKTAWTWLTS (413 aa). Cystine bridges form between C862-C927, C875-C907, C876-C909, and C881-C891. The E1 fusion peptide loop stretch occupies residues 897–914; sequence VYPFMWGGAYCFCDTENT. N947 and N1083 each carry an N-linked (GlcNAc...) asparagine; by host glycan. Intrachain disulfides connect C1072–C1084, C1114–C1189, C1119–C1193, and C1141–C1183. The chain crosses the membrane as a helical span at residues 1226–1246; sequence LLGGSAVIIIIGLVLATIVAM. Over 1247 to 1255 the chain is Cytoplasmic; sequence YVLTNQKHN.

Homodimer. Homomultimer. Interacts with host karyopherin KPNA4; this interaction allows the nuclear import of the viral capsid protein. Interacts with spike glycoprotein E2. Interacts with host IRAK1; the interaction leads to inhibition of IRAK1-dependent signaling. Part of a tetrameric complex composed of host CRM1, host importin alpha/beta dimer and the viral capsid; this complex blocks the receptor-mediated transport through the nuclear pore. Interacts with host phosphatase PPP1CA; this interaction dephosphorylates the capsid protein, which increases its ability to bind to the viral genome. In terms of assembly, the precursor of protein E3/E2 and E1 form a heterodimer shortly after synthesis. As to quaternary structure, interacts with spike glycoprotein E2. The precursor of protein E3/E2 and E1 form a heterodimer shortly after synthesis. Processing of the precursor of protein E3/E2 into E2 and E3 results in a heterodimer of the spike glycoproteins E2 and E1. Spike at virion surface are constituted of three E2-E1 heterodimers. After target cell attachment and endocytosis, E1 change conformation to form homotrimers. Interacts with 6K protein. Interacts with host LDLRAD3; this interaction mediates viral entry to the host cell. Interacts with spike glycoprotein E1. Processing of the precursor of protein E3/E2 into E2 and E3 results in a heterodimer of the spike glycoproteins E2 and E1. Spike at virion surface are constituted of a trimer of E2-E1 heterodimers. Interacts with 6K protein. Interacts with host LDLRAD3; this interaction mediates viral entry to the host cell. In terms of assembly, oligomer. Interacts with spike glycoprotein E1. Interacts with spike glycoprotein E2. In terms of processing, structural polyprotein: Specific enzymatic cleavages in vivo yield mature proteins. Capsid protein is auto-cleaved during polyprotein translation, unmasking a signal peptide at the N-terminus of the precursor of E3/E2. The remaining polyprotein is then targeted to the host endoplasmic reticulum, where host signal peptidase cleaves it into pE2, 6K and E1 proteins. pE2 is further processed to mature E3 and E2 by host furin in trans-Golgi vesicle. Post-translationally, phosphorylated on serine and threonine residues. Palmitoylated via thioester bonds. These palmitoylations may induce disruption of the C-terminus transmembrane. This would result in the reorientation of E2 C-terminus from lumenal to cytoplasmic side. In terms of processing, N-glycosylated. Post-translationally, palmitoylated via thioester bonds.

Its subcellular location is the virion. It localises to the host cytoplasm. The protein localises to the host cell membrane. The protein resides in the host nucleus. It is found in the virion membrane. Its subcellular location is the host Golgi apparatus. It localises to the host trans-Golgi network. The protein localises to the host endoplasmic reticulum. It carries out the reaction Autocatalytic release of the core protein from the N-terminus of the togavirus structural polyprotein by hydrolysis of a -Trp-|-Ser- bond.. Forms an icosahedral capsid with a T=4 symmetry composed of 240 copies of the capsid protein surrounded by a lipid membrane through which penetrate 80 spikes composed of trimers of E1-E2 heterodimers. The capsid protein binds to the viral RNA genome at a site adjacent to a ribosome binding site for viral genome translation following genome release. Possesses a protease activity that results in its autocatalytic cleavage from the nascent structural protein. Following its self-cleavage, the capsid protein transiently associates with ribosomes, and within several minutes the protein binds to viral RNA and rapidly assembles into icosahedric core particles. The resulting nucleocapsid eventually associates with the cytoplasmic domain of the spike glycoprotein E2 at the cell membrane, leading to budding and formation of mature virions. In case of infection, new virions attach to target cells and after clathrin-mediated endocytosis their membrane fuses with the host endosomal membrane. This leads to the release of the nucleocapsid into the cytoplasm, followed by an uncoating event necessary for the genomic RNA to become accessible. The uncoating might be triggered by the interaction of capsid proteins with ribosomes. Binding of ribosomes would release the genomic RNA since the same region is genomic RNA-binding and ribosome-binding. Specifically inhibits interleukin-1 receptor-associated kinase 1/IRAK1-dependent signaling during viral entry, representing a means by which the alphaviruses may evade innate immune detection and activation prior to viral gene expression. Inhibits host transcription. Forms a tetrameric complex with XPO1/CRM1 and the nuclear import receptor importin. This complex blocks the central channel of host nuclear pores thereby inhibiting the receptor-mediated nuclear transport and thus the host mRNA and rRNA transcription. The inhibition of transcription is linked to a cytopathic effect on the host cell. Functionally, provides the signal sequence for the translocation of the precursor of protein E3/E2 to the host endoplasmic reticulum. Furin-cleaved E3 remains associated with spike glycoprotein E1 and mediates pH protection of the latter during the transport via the secretory pathway. After virion release from the host cell, the assembly protein E3 is gradually released in the extracellular space. Its function is as follows. Plays a role in viral attachment to target host cell, by binding to the cell receptor LDLRAD3. Synthesized as a p62 precursor which is processed by furin at the cell membrane just before virion budding, giving rise to E2-E1 heterodimer. The p62-E1 heterodimer is stable, whereas E2-E1 is unstable and dissociate at low pH. p62 is processed at the last step, presumably to avoid E1 fusion activation before its final export to cell surface. E2 C-terminus contains a transitory transmembrane that would be disrupted by palmitoylation, resulting in reorientation of the C-terminal tail from lumenal to cytoplasmic side. This step is critical since E2 C-terminus is involved in budding by interacting with capsid proteins. This release of E2 C-terminus in cytoplasm occurs lately in protein export, and precludes premature assembly of particles at the endoplasmic reticulum membrane. In terms of biological role, acts as a viroporin that participates in virus glycoprotein processing and transport to the plasma membrane, cell permeabilization and budding of viral particles. Disrupts the calcium homeostasis of the cell, probably at the endoplasmic reticulum level. This leads to cytoplasmic calcium elevation. Because of its lipophilic properties, the 6K protein is postulated to influence the selection of lipids that interact with the transmembrane domains of the glycoproteins, which, in turn, affects the deformability of the bilayer required for the extreme curvature that occurs as budding proceeds. Present in low amount in virions, about 3% compared to viral glycoproteins. Class II viral fusion protein. Fusion activity is inactive as long as E1 is bound to E2 in mature virion. After virus attachment to cell receptor LDLRAD3 and endocytosis, acidification of the endosome induce dissociation of E1/E2 heterodimer and concomitant trimerization of the E1 subunits. This E1 trimer is fusion active, and promotes release of viral nucleocapsid in cytoplasm after endosome and viral membrane fusion. Efficient fusion requires the presence of cholesterol and sphingolipid in the target membrane. In Venezuelan equine encephalitis virus (strain P676) (VEEV), this protein is Structural polyprotein.